We begin with the raw amino-acid sequence, 317 residues long: HTH-type transcriptional repressor PA14_22550 (317 aa).

An HTH lysR-type domain is found at 1-59; the sequence is MDKLTAMATFVKVVDAGSFTRAADALGLPKARVSQRVSDLEKHLGVRLLNRTTRALSLT. The H-T-H motif DNA-binding region spans 19–38; it reads FTRAADALGLPKARVSQRVS.

It belongs to the LysR transcriptional regulatory family.

Represses the transcription of the operon that consists of PA14_22510 to PA14_22540. The polypeptide is HTH-type transcriptional repressor PA14_22550 (Pseudomonas aeruginosa (strain UCBPP-PA14)).